The chain runs to 473 residues: P3 protein (473 aa).

The next 9 helical transmembrane spans lie at 25-45 (FVGM…AQVM), 221-241 (PMLL…FLMA), 249-269 (ALAL…SYLF), 277-297 (VTLA…FLPL), 316-336 (ISKI…GVVI), 356-376 (FILL…ILVG), 381-401 (IVLV…SLAI), 413-433 (VSIE…QLSL), and 446-466 (FIVA…QFIY).

This sequence belongs to the bile acid:sodium symporter (BASS) (TC 2.A.28) family.

The protein resides in the membrane. Functionally, the ubiquitous expression and the conservation of the sequence in distant animal species suggest that the gene codes for a protein with housekeeping functions. This chain is P3 protein (Slc10a3), found in Mus musculus (Mouse).